Here is a 2559-residue protein sequence, read N- to C-terminus: Stabilin-2 (2559 aa).

Residues 1 to 28 (MARSKLLLGKLLPLILIFLGLLVQNACS) form the signal peptide. Residues 29 to 2464 (PTEAPELTKR…PPTAATAAHS (2436 aa)) are Extracellular-facing. N-linked (GlcNAc...) asparagine glycosylation occurs at Asn71. EGF-like domains lie at 116–156 (DCME…TACE), 164–201 (FGPN…PRCD), 203–244 (PIPE…QTCK), 245–284 (PINP…QVCL), and 330–370 (MTDI…LNCY). Intrachain disulfides connect Cys120–Cys134, Cys128–Cys144, and Cys146–Cys155. An N-linked (GlcNAc...) asparagine glycan is attached at Asn167. 12 cysteine pairs are disulfide-bonded: Cys168/Cys179, Cys172/Cys189, Cys191/Cys200, Cys207/Cys218, Cys212/Cys230, Cys232/Cys243, Cys249/Cys260, Cys254/Cys270, Cys272/Cys283, Cys334/Cys346, Cys340/Cys356, and Cys358/Cys369. Asn345 carries N-linked (GlcNAc...) asparagine glycosylation. 2 consecutive FAS1 domains span residues 379-512 (ELNT…DRAM) and 522-659 (NPQQ…TGVL). Residues Asn572, Asn626, Asn673, and Asn691 are each glycosylated (N-linked (GlcNAc...) asparagine). One can recognise an EGF-like 6 domain in the interval 743–783 (DCNPCPGGFMNPCSGNGQCIDGLGGNGTCICEDGFQGSRCQ). 3 disulfide bridges follow: Cys747–Cys761, Cys755–Cys771, and Cys773–Cys782. Asn768 carries an N-linked (GlcNAc...) asparagine glycan. Asn796 carries N-linked (GlcNAc...) asparagine glycosylation. EGF-like domains are found at residues 833–873 (QTSA…TLCS), 874–917 (KKDP…RDCV), 918–960 (EINS…IDCE), and 961–1002 (PIIS…VLCY). Disulfide bonds link Cys837/Cys850, Cys844/Cys859, Cys861/Cys872, Cys878/Cys893, Cys887/Cys903, Cys905/Cys916, Cys922/Cys936, Cys930/Cys946, Cys948/Cys959, Cys965/Cys978, Cys972/Cys988, and Cys990/Cys1001. A glycan (N-linked (GlcNAc...) asparagine) is linked at Asn854. Residue Asn933 is glycosylated (N-linked (GlcNAc...) asparagine). FAS1 domains lie at 1002–1135 (YGNV…NKVL) and 1145–1273 (LPSL…EKVL). 5 N-linked (GlcNAc...) asparagine glycosylation sites follow: Asn1024, Asn1036, Asn1108, Asn1255, and Asn1283. The 66-residue stretch at 1350-1415 (PQCQACPGKG…CSCVHGRCNQ (66 aa)) folds into the Laminin EGF-like 1 domain. Disulfide bonds link Cys1355–Cys1369, Cys1363–Cys1379, Cys1381–Cys1390, Cys1402–Cys1413, Cys1406–Cys1423, Cys1425–Cys1434, Cys1443–Cys1453, Cys1447–Cys1463, Cys1465–Cys1476, Cys1482–Cys1495, Cys1489–Cys1505, Cys1507–Cys1518, Cys1524–Cys1537, Cys1531–Cys1547, Cys1549–Cys1560, Cys1566–Cys1579, Cys1573–Cys1589, and Cys1591–Cys1602. N-linked (GlcNAc...) asparagine glycosylation is found at Asn1374 and Asn1386. 4 EGF-like domains span residues 1439-1477 (TTDN…TVCT), 1478-1519 (AINA…IVCL), 1520-1561 (EINP…KVCT), and 1562-1603 (LINV…IVCR). Asn1444 carries an N-linked (GlcNAc...) asparagine glycan. A glycan (N-linked (GlcNAc...) asparagine) is linked at Asn1472. The N-linked (GlcNAc...) asparagine glycan is linked to Asn1580. FAS1 domains are found at residues 1603–1731 (RGSI…DTLL) and 1747–1888 (VLLN…DCLL). Asn1750 carries N-linked (GlcNAc...) asparagine glycosylation. The Laminin EGF-like 2 domain occupies 1965–2030 (PDCQACPGGP…GCSEHGQCDE (66 aa)). Cystine bridges form between Cys1970/Cys1984, Cys1978/Cys1994, Cys1996/Cys2005, Cys2017/Cys2028, Cys2022/Cys2038, Cys2040/Cys2049, Cys2059/Cys2069, Cys2063/Cys2075, Cys2077/Cys2088, Cys2094/Cys2107, Cys2101/Cys2116, Cys2118/Cys2129, Cys2135/Cys2149, Cys2143/Cys2159, Cys2161/Cys2172, Cys2228/Cys2296, and Cys2252/Cys2273. Asn2001 is a glycosylation site (N-linked (GlcNAc...) asparagine). EGF-like domains are found at residues 2055–2089 (VIPV…ITCT), 2090–2130 (VVDF…HSCT), and 2131–2173 (EIDP…RDCE). Asn2072 carries an N-linked (GlcNAc...) asparagine glycan. The Link domain occupies 2206–2298 (GVFHLRSPLG…SEMWDVFCYR (93 aa)). 5 N-linked (GlcNAc...) asparagine glycosylation sites follow: Asn2287, Asn2303, Asn2375, Asn2391, and Asn2400. In terms of domain architecture, FAS1 7 spans 2318–2452 (NGNLLQVLMS…GVLHIISEPL (135 aa)). The chain crosses the membrane as a helical span at residues 2465-2485 (GLGTGIFCAVVLVTGAIALAA). The Cytoplasmic segment spans residues 2486-2559 (YSYFRLNQRT…NSDPLGALRS (74 aa)). Phosphoserine is present on Ser2503. Positions 2510-2520 (LAFGKQQPESI) are interaction with TMSB4X. The segment at 2514–2559 (KQQPESITNPLYETSTPAAPEPSCDPFTDSGERELENSDPLGALRS) is disordered. Over residues 2516–2530 (QPESITNPLYETSTP) the composition is skewed to polar residues.

As to quaternary structure, interacts with heparin, alpha-M/beta-2 integrin (ITGAM and ITGB2), and thymosin beta 4 (TMSB4X). Interacts with GULP1. Associates with clathrin and adapter protein AP-2; in liver sinusoidal endothelial cells (LSECs). In terms of processing, glycosylated. Proteolytically processed to yield a smaller protein. In terms of tissue distribution, expressed in endothelial sinuses of liver, lymph nodes, bone marrow, spleen and in specialised structures of eye, heart, brain and kidney. Expression is detected in corneal and lens epithelium, in mesenchymal cells of the heart valves, in the ependymal cells lining the ventricles in the brain, and in the prismatic epithelial cells covering the renal papillae.

The protein localises to the cytoplasm. The protein resides in the cell membrane. Functionally, phosphatidylserine receptor that enhances the engulfment of apoptotic cells. Hyaluronan receptor that binds to and mediates endocytosis of hyaluronic acid (HA). Also acts, in different species, as a primary systemic scavenger receptor for heparin (Hep), chondroitin sulfate (CS), dermatan sulfate (DS), nonglycosaminoglycan (GAG), acetylated low-density lipoprotein (AcLDL), pro-collagen propeptides and advanced glycation end products (AGE). May serve to maintain tissue integrity by supporting extracellular matrix turnover or it may contribute to maintaining fluidity of bodily liquids by resorption of hyaluronan. Counter receptor which plays an important role in lymphocyte recruitment in the hepatic vasculature. Binds to both Gram-positive and Gram-negative bacteria and may play a role in defense against bacterial infection. The proteolytically processed short form also functions as an endocytosis receptor for heparin internalization as well as HA and CS. The polypeptide is Stabilin-2 (Mus musculus (Mouse)).